Here is a 78-residue protein sequence, read N- to C-terminus: MSEVLPYGDEKLSPYGDGGDVGQIFSCRLQDTNNFFGAGQSKRPPKLGQIGRSKRVVIEDDRIDDVLKTMTDKAPPGV.

The interval 41 to 68 (SKRPPKLGQIGRSKRVVIEDDRIDDVLK) is CAMK2 inhibitory domain.

It belongs to the CAMK2N family. As to quaternary structure, interacts with CAMK2B; the presence of Ca(2+)/calmodulin increases the interaction but is not essential. Interacts with CAMK2A; this interaction requires CAMK2A activation by Ca(2+). As to expression, expressed in the brain (at protein level). Expressed in cardiomyocytes but not cardiac fibroblasts (at protein level).

It localises to the synapse. Its subcellular location is the cell projection. It is found in the dendrite. The protein localises to the postsynaptic density. Its function is as follows. Potent and specific inhibitor of CaM-kinase II (CAMK2). Plays a role in the maintenance of long-term retrieval-induced memory in response to contextual fear. Modulates blood pressure and vascular reactivity via regulation of CAMK2 activity in addition to regulation of left ventricular mass. Mediates the NLRP3 inflammasome in cardiomyocytes via acting as an inhibitor of the MAPK14/p38 and MAPK8/JNK pathways, thereby regulating ventricular remodeling and cardiac rhythm post-myocardial infarction. Negatively effects insulin sensitivity and promotes lipid formation in adipose tissues independent of CAMK2 signaling. This Mus musculus (Mouse) protein is Calcium/calmodulin-dependent protein kinase II inhibitor 1 (Camk2n1).